The sequence spans 933 residues: Isoleucine--tRNA ligase (933 aa).

The 'HIGH' region motif lies at proline 57 to histidine 67. Glutamate 554 contributes to the L-isoleucyl-5'-AMP binding site. The short motif at lysine 595–serine 599 is the 'KMSKS' region element. Lysine 598 serves as a coordination point for ATP.

The protein belongs to the class-I aminoacyl-tRNA synthetase family. IleS type 1 subfamily. In terms of assembly, monomer.

It is found in the cytoplasm. The catalysed reaction is tRNA(Ile) + L-isoleucine + ATP = L-isoleucyl-tRNA(Ile) + AMP + diphosphate. Functionally, catalyzes the attachment of isoleucine to tRNA(Ile). As IleRS can inadvertently accommodate and process structurally similar amino acids such as valine, to avoid such errors it has two additional distinct tRNA(Ile)-dependent editing activities. One activity is designated as 'pretransfer' editing and involves the hydrolysis of activated Val-AMP. The other activity is designated 'posttransfer' editing and involves deacylation of mischarged Val-tRNA(Ile). The polypeptide is Isoleucine--tRNA ligase (Streptococcus pyogenes serotype M1).